Consider the following 181-residue polypeptide: Protein AC41 (181 aa).

Plays a role in late gene expression. The protein is Protein AC41 (AC41) of Autographa californica nuclear polyhedrosis virus (AcMNPV).